A 123-amino-acid chain; its full sequence is Putative C-type lectin protein FPV003/FPV258 (123 aa).

Positions 21–122 (CRGPYTSYNN…CNATYGFVCI (102 aa)) constitute a C-type lectin domain.

The chain is Putative C-type lectin protein FPV003/FPV258 from Fowlpox virus (strain NVSL) (FPV).